The primary structure comprises 384 residues: S-adenosylmethionine synthase (384 aa).

ATP is bound at residue histidine 15. Aspartate 17 contacts Mg(2+). K(+) is bound at residue glutamate 43. The L-methionine site is built by glutamate 56 and glutamine 99. The segment at 99–109 is flexible loop; it reads QSADINQGVDR. ATP is bound by residues 164 to 166, 230 to 231, aspartate 239, 245 to 246, alanine 262, and lysine 266; these read DAK, RF, and RK. Aspartate 239 is an L-methionine binding site. Lysine 270 is an L-methionine binding site.

Belongs to the AdoMet synthase family. Homotetramer; dimer of dimers. Requires Mg(2+) as cofactor. The cofactor is K(+).

It is found in the cytoplasm. It catalyses the reaction L-methionine + ATP + H2O = S-adenosyl-L-methionine + phosphate + diphosphate. It participates in amino-acid biosynthesis; S-adenosyl-L-methionine biosynthesis; S-adenosyl-L-methionine from L-methionine: step 1/1. Its function is as follows. Catalyzes the formation of S-adenosylmethionine (AdoMet) from methionine and ATP. The overall synthetic reaction is composed of two sequential steps, AdoMet formation and the subsequent tripolyphosphate hydrolysis which occurs prior to release of AdoMet from the enzyme. This chain is S-adenosylmethionine synthase, found in Haemophilus influenzae (strain 86-028NP).